The following is a 205-amino-acid chain: Adenylyl-sulfate kinase (205 aa).

ATP is bound at residue 31-38 (GLSGAGKS). Ser-105 (phosphoserine intermediate) is an active-site residue.

The protein belongs to the APS kinase family.

The enzyme catalyses adenosine 5'-phosphosulfate + ATP = 3'-phosphoadenylyl sulfate + ADP + H(+). It functions in the pathway sulfur metabolism; hydrogen sulfide biosynthesis; sulfite from sulfate: step 2/3. Functionally, catalyzes the synthesis of activated sulfate. This is Adenylyl-sulfate kinase from Shewanella baltica (strain OS155 / ATCC BAA-1091).